The primary structure comprises 1349 residues: Protein turtle homolog B (1349 aa).

An N-terminal signal peptide occupies residues 1 to 20 (MIWYVATFIASVIGTRGLAA). The Extracellular segment spans residues 21 to 722 (EGAHGLREEP…DLTEDGLARP (702 aa)). Ig-like domains are found at residues 24 to 129 (HGLR…HNGS), 139 to 226 (PTFT…LLVQ), 228 to 320 (PPFI…AYLT), 324 to 415 (PARV…ARLV), and 420 to 504 (PYFT…THLT). Cystine bridges form between C45-C113 and C161-C208. N-linked (GlcNAc...) asparagine glycans are attached at residues N241 and N258. 3 disulfide bridges follow: C250-C303, C346-C397, and C442-C488. 2 consecutive Fibronectin type-III domains span residues 512 to 604 (APGS…TLAF) and 614 to 708 (LVTP…STDI). N-linked (GlcNAc...) asparagine glycosylation occurs at N624. Residues 723-743 (VLAGIVATICFLAAAILFSTL) traverse the membrane as a helical segment. Over 744-1349 (AACFVNKQRK…SPPERALSKL (606 aa)) the chain is Cytoplasmic. Disordered stretches follow at residues 758–817 (RKKD…EKEL), 911–1081 (QLTP…RGLP), and 1099–1349 (APKG…LSKL). 3 positions are modified to phosphoserine: S775, S783, and S794. Over residues 911-921 (QLTPLSSSQES) the composition is skewed to polar residues. A compositionally biased stretch (low complexity) spans 985 to 998 (VPEVGSPLSSVMSS). Composition is skewed to polar residues over residues 1018-1033 (ENAS…TPTG), 1129-1141 (LVSQ…TSQG), and 1199-1214 (SRLS…SRTG). Residue R1136 is modified to Omega-N-methylarginine. Residues S1207 and S1215 each carry the phosphoserine modification. A compositionally biased stretch (low complexity) spans 1251–1271 (STPSTGSPSQSSRSGSPSYRP). The segment covering 1283-1292 (PSPPPGPAPA) has biased composition (pro residues).

It belongs to the immunoglobulin superfamily. Turtle family. As to quaternary structure, found in a complex with MAGI2 and NLGN2, where it interacts with MAGI2 (via PDZ 5 and PDZ 6 domains). In terms of processing, N-glycosylated and sialylated. Not significantly O-glycosylated.

It localises to the postsynaptic cell membrane. The protein localises to the postsynaptic density. Functionally, transmembrane protein which is abundantly expressed in interneurons, where it may regulate inhibitory synapse development. May mediate homophilic cell adhesion. This chain is Protein turtle homolog B (IGSF9B), found in Homo sapiens (Human).